The following is a 291-amino-acid chain: Ribosomal RNA small subunit methyltransferase H (291 aa).

S-adenosyl-L-methionine contacts are provided by residues 31–33, D50, F77, D98, and Q105; that span reads GGH.

This sequence belongs to the methyltransferase superfamily. RsmH family.

Its subcellular location is the cytoplasm. The catalysed reaction is cytidine(1402) in 16S rRNA + S-adenosyl-L-methionine = N(4)-methylcytidine(1402) in 16S rRNA + S-adenosyl-L-homocysteine + H(+). In terms of biological role, specifically methylates the N4 position of cytidine in position 1402 (C1402) of 16S rRNA. This chain is Ribosomal RNA small subunit methyltransferase H, found in Endomicrobium trichonymphae.